The following is a 134-amino-acid chain: Small ribosomal subunit protein bS6 (134 aa).

The disordered stretch occupies residues 99 to 134; it reads EPSAMMQKRDRDERKDRERGRRRDEDGFSGDRNEEN. A compositionally biased stretch (basic and acidic residues) spans 105–134; that stretch reads QKRDRDERKDRERGRRRDEDGFSGDRNEEN.

This sequence belongs to the bacterial ribosomal protein bS6 family.

Functionally, binds together with bS18 to 16S ribosomal RNA. The chain is Small ribosomal subunit protein bS6 from Methylobacterium nodulans (strain LMG 21967 / CNCM I-2342 / ORS 2060).